Consider the following 377-residue polypeptide: Flagellin C (377 aa).

Coiled-coil stretches lie at residues 103-129 (SNSKADRVAIQEEITALNDELNRVAET) and 301-340 (VDSHRAELGAFQNRFNHAINNLDNINENVNASKSRIKDTD).

This sequence belongs to the bacterial flagellin family. As to quaternary structure, heteromer of multiple flagellin subunits including FlaA, FlaB, FlaC, FlaD and FlaE.

It localises to the secreted. It is found in the bacterial flagellum. Its function is as follows. Flagellin is the subunit protein which polymerizes to form the filaments of bacterial flagella. FlaC is not essential for flagellar synthesis and motility. The sequence is that of Flagellin C (flaC) from Vibrio cholerae serotype O1 (strain ATCC 39541 / Classical Ogawa 395 / O395).